Here is a 234-residue protein sequence, read N- to C-terminus: Probable transcriptional regulatory protein PSPTO_3162 (234 aa).

Belongs to the TACO1 family.

The protein resides in the cytoplasm. The chain is Probable transcriptional regulatory protein PSPTO_3162 from Pseudomonas syringae pv. tomato (strain ATCC BAA-871 / DC3000).